Consider the following 234-residue polypeptide: MKVIPAIDLMDGQVVRLRRGKAKDKTVYSDDPVKVALTWEKDGADMLHIVDLDATLGRGNNIDMIRNITDAVSIPVEAAGGLRSIDLVAGALEGADRVVLGTLAFRDRDALREILESYGSKKIVISVDHVKGKIMVDGWRENTGINLVDAMQGFVGAGFTEFLLTDVDRDGMMQGPETDTLGKVCRMSDSHVIASGGITVPGDVKSVRDAGAWGVILGKALYEGKVSVKGAISC.

Asp8 serves as the catalytic Proton acceptor. The Proton donor role is filled by Asp128.

The protein belongs to the HisA/HisF family.

The protein resides in the cytoplasm. It catalyses the reaction 1-(5-phospho-beta-D-ribosyl)-5-[(5-phospho-beta-D-ribosylamino)methylideneamino]imidazole-4-carboxamide = 5-[(5-phospho-1-deoxy-D-ribulos-1-ylimino)methylamino]-1-(5-phospho-beta-D-ribosyl)imidazole-4-carboxamide. It participates in amino-acid biosynthesis; L-histidine biosynthesis; L-histidine from 5-phospho-alpha-D-ribose 1-diphosphate: step 4/9. This chain is 1-(5-phosphoribosyl)-5-[(5-phosphoribosylamino)methylideneamino] imidazole-4-carboxamide isomerase, found in Cenarchaeum symbiosum (strain A).